A 213-amino-acid polypeptide reads, in one-letter code: Thiamine-phosphate synthase (213 aa).

4-amino-2-methyl-5-(diphosphooxymethyl)pyrimidine is bound by residues 40–44 (QFREK) and Asn-75. Mg(2+) is bound by residues Asp-76 and Asp-95. Position 113 (Ser-113) interacts with 4-amino-2-methyl-5-(diphosphooxymethyl)pyrimidine. Position 139–141 (139–141 (TPS)) interacts with 2-[(2R,5Z)-2-carboxy-4-methylthiazol-5(2H)-ylidene]ethyl phosphate. Position 142 (Lys-142) interacts with 4-amino-2-methyl-5-(diphosphooxymethyl)pyrimidine. 2-[(2R,5Z)-2-carboxy-4-methylthiazol-5(2H)-ylidene]ethyl phosphate contacts are provided by residues Gly-171 and 191–192 (IS).

It belongs to the thiamine-phosphate synthase family. It depends on Mg(2+) as a cofactor.

The enzyme catalyses 2-[(2R,5Z)-2-carboxy-4-methylthiazol-5(2H)-ylidene]ethyl phosphate + 4-amino-2-methyl-5-(diphosphooxymethyl)pyrimidine + 2 H(+) = thiamine phosphate + CO2 + diphosphate. It catalyses the reaction 2-(2-carboxy-4-methylthiazol-5-yl)ethyl phosphate + 4-amino-2-methyl-5-(diphosphooxymethyl)pyrimidine + 2 H(+) = thiamine phosphate + CO2 + diphosphate. It carries out the reaction 4-methyl-5-(2-phosphooxyethyl)-thiazole + 4-amino-2-methyl-5-(diphosphooxymethyl)pyrimidine + H(+) = thiamine phosphate + diphosphate. Its pathway is cofactor biosynthesis; thiamine diphosphate biosynthesis; thiamine phosphate from 4-amino-2-methyl-5-diphosphomethylpyrimidine and 4-methyl-5-(2-phosphoethyl)-thiazole: step 1/1. Condenses 4-methyl-5-(beta-hydroxyethyl)thiazole monophosphate (THZ-P) and 2-methyl-4-amino-5-hydroxymethyl pyrimidine pyrophosphate (HMP-PP) to form thiamine monophosphate (TMP). The protein is Thiamine-phosphate synthase of Staphylococcus aureus (strain bovine RF122 / ET3-1).